Here is a 264-residue protein sequence, read N- to C-terminus: Thymidylate synthase (264 aa).

A dUMP-binding site is contributed by Arg-21. Residue His-51 coordinates (6R)-5,10-methylene-5,6,7,8-tetrahydrofolate. DUMP is bound at residue 126 to 127; sequence RR. Cys-146 functions as the Nucleophile in the catalytic mechanism. DUMP-binding positions include 166–169, Asn-177, and 207–209; these read RSCD and HLY. Residue Asp-169 coordinates (6R)-5,10-methylene-5,6,7,8-tetrahydrofolate. Ala-263 serves as a coordination point for (6R)-5,10-methylene-5,6,7,8-tetrahydrofolate.

The protein belongs to the thymidylate synthase family. Bacterial-type ThyA subfamily. Homodimer.

It localises to the cytoplasm. The enzyme catalyses dUMP + (6R)-5,10-methylene-5,6,7,8-tetrahydrofolate = 7,8-dihydrofolate + dTMP. Its pathway is pyrimidine metabolism; dTTP biosynthesis. Its function is as follows. Catalyzes the reductive methylation of 2'-deoxyuridine-5'-monophosphate (dUMP) to 2'-deoxythymidine-5'-monophosphate (dTMP) while utilizing 5,10-methylenetetrahydrofolate (mTHF) as the methyl donor and reductant in the reaction, yielding dihydrofolate (DHF) as a by-product. This enzymatic reaction provides an intracellular de novo source of dTMP, an essential precursor for DNA biosynthesis. The chain is Thymidylate synthase from Escherichia fergusonii (strain ATCC 35469 / DSM 13698 / CCUG 18766 / IAM 14443 / JCM 21226 / LMG 7866 / NBRC 102419 / NCTC 12128 / CDC 0568-73).